The sequence spans 479 residues: MSVCTEIDYKLYTELKKIAGNSLFLFNENGDFTEVVLNSSFKFLVPIGFFSSIDIPLKKPIEYKNNNNNIEHSKNIILPNLYPFQKHVVSEVLLSMEKKNKHKRPTYITLHLACGFGKTITSCYLLSLHKKKAVICLPNKMLINQWKRAIESINMDHIVSVDGVSNLLKEMVKKTADILIIVSRHLLNEEFCKKIYLNYDIFILDESHMYNLMNNSAVTKFLTYYPPKVCYFLTATPRKVNRIYCNDIINVSNSLELKKYIKIVEFFFETYSSDTIKQMVKKLNTNYNKYHMYTEKILAEDVPRNELILDTIIYDFNKMLINRLIIVTKLRKHMMFFYDRLSEKFGLDVVYLGDAKNKNISDIVKKIKSIDRFIFISTTNYSGTGLDVPTLDSLVICSAVMNSMQIEQILGRICRSSVSKTRTVIVFPNTSIKEIKHMVGFFTQKIITLAIEKLNFKKIEKKGKKKELALCKAFNLQTH.

Residues 99–255 (KNKHKRPTYI…NDIINVSNSL (157 aa)) form the Helicase ATP-binding domain. 112–119 (LACGFGKT) provides a ligand contact to ATP. A DESH box motif is present at residues 205-208 (DESH). In terms of domain architecture, Helicase C-terminal spans 308–469 (ILDTIIYDFN…EKKGKKKELA (162 aa)).

The protein belongs to the helicase family. Poxviruses subfamily. As to quaternary structure, interacts with G2. Might be part of a transcription complex composed at least of G2, A18, and H5.

The protein resides in the virion. DNA helicase which seems to act as a postreplicative transcription termination factor. Involved in ATP-dependent release of nascent RNA. Forms a stable complex with single-stranded DNA, and to a lesser extent RNA. The sequence is that of Transcript termination protein A18 from Homo sapiens (Human).